The sequence spans 101 residues: MVAKLTEQERVEKLQPLLDAGWCLVEGRDAIYKEFLFKDFNQAFSFMTGVALLAEKMNHHPEWFNVYNKLQVTLSTHDVGGLSSQDIRMATYLETQAKLLH.

The protein belongs to the pterin-4-alpha-carbinolamine dehydratase family.

It catalyses the reaction (4aS,6R)-4a-hydroxy-L-erythro-5,6,7,8-tetrahydrobiopterin = (6R)-L-erythro-6,7-dihydrobiopterin + H2O. This Drosophila virilis (Fruit fly) protein is Pterin-4-alpha-carbinolamine dehydratase (Pcd).